Reading from the N-terminus, the 150-residue chain is uncharacterized protein (150 aa).

Repeat copies occupy residues 101 to 105, 106 to 110, 111 to 115, 116 to 120, and 121 to 125. The tract at residues 101–125 is 5 X 5 AA tandem repeats of [FH]-H-[EK]-[IV]-N; sequence FHEVNHHEVNHHKINHHEVNHHKIN.

Belongs to the asfivirus D129L family.

This is an uncharacterized protein from African swine fever virus (isolate Tick/Malawi/Lil 20-1/1983) (ASFV).